Here is a 393-residue protein sequence, read N- to C-terminus: uncharacterized protein (393 aa).

A B box-type zinc finger spans residues 6–47 (KYDNKCAIHKEHKIKMICATCKDVVCNECILLDHNGHKFGRI). 4 residues coordinate Zn(2+): cysteine 11, histidine 14, cysteine 34, and histidine 39.

This is an uncharacterized protein from Dictyostelium discoideum (Social amoeba).